The primary structure comprises 118 residues: MARIAGINIPDHKHTVIALTSIFGIGKTRSQAICAATEIAENVKISELSEEQIDKLRDEVAKFVVEGDLRREVTLSIKRLMDLGTYRGLRHRRGLPVRGQRTKTNARTRKGPRKPIKK.

The tract at residues 91 to 118 is disordered; the sequence is HRRGLPVRGQRTKTNARTRKGPRKPIKK.

It belongs to the universal ribosomal protein uS13 family. Part of the 30S ribosomal subunit. Forms a loose heterodimer with protein S19. Forms two bridges to the 50S subunit in the 70S ribosome.

Located at the top of the head of the 30S subunit, it contacts several helices of the 16S rRNA. In the 70S ribosome it contacts the 23S rRNA (bridge B1a) and protein L5 of the 50S subunit (bridge B1b), connecting the 2 subunits; these bridges are implicated in subunit movement. Contacts the tRNAs in the A and P-sites. This chain is Small ribosomal subunit protein uS13, found in Pectobacterium atrosepticum (strain SCRI 1043 / ATCC BAA-672) (Erwinia carotovora subsp. atroseptica).